A 76-amino-acid chain; its full sequence is Mu-scoloptoxin(15)-Ssm1a (76 aa).

The signal sequence occupies residues 1–23 (MEKKIIFLVFLVALLALPGFIST). The segment at 33–36 (KKRK) is important for inhibition of KCNQ4. 2 disulfides stabilise this stretch: Cys43–Cys69 and Cys47–Cys71.

It belongs to the scoloptoxin-15 family. In terms of tissue distribution, expressed by the venom gland.

It is found in the secreted. Functionally, blocks voltage-gated potassium channels Kv7.4/KCNQ4 (IC(50)=2.5 uM), Kv7.1/KCNQ1 (IC(50)=2.8 uM), Kv7.2/KCNQ2 (IC(50)=2.7 uM) and Kv7.5/KCNQ5 (IC(50)=2.7 uM). Targets the pore domain, in particular negatively charged residues 'Asp-266' and 'Asp-288', of KCNQ4 and probably other KCNQ channel family members where these residues are conserved. In vivo, shows vasoconstrictive activity resulting in acute hypertension when injected intravenously in mice. Also induces coronary vasospasms ultimately leading to heart failure. Induces seizures when injected into the hippocampus of mice. Decreases respiratory rate while increasing respiratory amplitude, probably by triggering a contraction of the bronchial ring. The polypeptide is Mu-scoloptoxin(15)-Ssm1a (Scolopendra mutilans (Chinese red-headed centipede)).